The following is a 251-amino-acid chain: Cholesterol 25-hydroxylase-like protein (251 aa).

Transmembrane regions (helical) follow at residues 22 to 42 (FFPVLFSITVYLSFCLPFVLL), 69 to 89 (WSCLALSLYNHVVYIFPLSVL), and 108 to 128 (VVWDLAACLLLFDFQYFVWHL). One can recognise a Fatty acid hydroxylase domain in the interval 113 to 247 (AACLLLFDFQ…FTHWDKLFGT (135 aa)). A Histidine box-1 motif is present at residues 126–130 (WHLLH). A Histidine box-2 motif is present at residues 141–145 (HKVHH). The Histidine box-3 motif lies at 222 to 228 (HHDVHHQ).

The protein belongs to the sterol desaturase family. It depends on Fe cation as a cofactor.

The protein localises to the endoplasmic reticulum membrane. It catalyses the reaction cholesterol + AH2 + O2 = 25-hydroxycholesterol + A + H2O. The enzyme catalyses cholesterol + NADPH + O2 + H(+) = 25-hydroxycholesterol + NADP(+) + H2O. Its function is as follows. Catalyzes the formation of 25-hydroxycholesterol from cholesterol, leading to repress cholesterol biosynthetic enzymes. Plays a key role in cell positioning and movement in lymphoid tissues: 25-hydroxycholesterol is an intermediate in biosynthesis of 7-alpha,25-dihydroxycholesterol (7-alpha,25-OHC), an oxysterol that acts as a ligand for the G protein-coupled receptor GPR183/EBI2, a chemotactic receptor for a number of lymphoid cells. May play an important role in regulating lipid metabolism by synthesizing a corepressor that blocks sterol regulatory element binding protein (SREBP) processing. In testis, production of 25-hydroxycholesterol by macrophages may play a role in Leydig cell differentiation. This Danio rerio (Zebrafish) protein is Cholesterol 25-hydroxylase-like protein (ch25h).